A 462-amino-acid polypeptide reads, in one-letter code: Nuclear factor interleukin-3-regulated protein (462 aa).

A Glycyl lysine isopeptide (Lys-Gly) (interchain with G-Cter in SUMO2) cross-link involves residue K24. The bZIP domain occupies 73 to 136; the sequence is DAMYWEKRRK…GLISSTAYAQ (64 aa). Residues 79-95 are basic motif; it reads KRRKNNEAAKRSREKRR. Positions 99-106 are leucine-zipper; it reads LVLENKLI. 2 disordered regions span residues 189–237 and 258–302; these read DVSE…DDRG and SPPL…IHSP. Positions 201–210 are enriched in polar residues; the sequence is ESSVQGSCRS. K214 is covalently cross-linked (Glycyl lysine isopeptide (Lys-Gly) (interchain with G-Cter in SUMO2)). K219 is covalently cross-linked (Glycyl lysine isopeptide (Lys-Gly) (interchain with G-Cter in SUMO1); alternate). Residue K219 forms a Glycyl lysine isopeptide (Lys-Gly) (interchain with G-Cter in SUMO2); alternate linkage. The span at 227–237 shows a compositional bias: basic and acidic residues; it reads SYTREPRDDRG. A compositionally biased stretch (polar residues) spans 264-274; the sequence is VNRSSSNSPRT. A necessary for transcriptional repression and sufficient for interaction with DR1 region spans residues 299 to 363; the sequence is IHSPVELKHV…PIDMTSKRHF (65 aa). S301 carries the phosphoserine modification. Glycyl lysine isopeptide (Lys-Gly) (interchain with G-Cter in SUMO2) cross-links involve residues K306, K314, K326, K332, K337, and K350. The residue at position 353 (S353) is a Phosphoserine. Glycyl lysine isopeptide (Lys-Gly) (interchain with G-Cter in SUMO2) cross-links involve residues K360, K394, K401, K406, K412, K419, K424, K434, and K448.

It belongs to the bZIP family. NFIL3 subfamily. Homodimer. Binds DNA as a dimer. Interacts with DR1. Interacts with PER2 and CRY2. Interacts with NR0B2. Interacts with MYSM1. Expressed in bladder stomach, thyroid, spinal cord, lymph node, trachea, adrenal gland, bone marrow and muscle.

It localises to the nucleus. Its function is as follows. Acts as a transcriptional regulator that recognizes and binds to the sequence 5'-[GA]TTA[CT]GTAA[CT]-3', a sequence present in many cellular and viral promoters. Represses transcription from promoters with activating transcription factor (ATF) sites. Represses promoter activity in osteoblasts. Represses transcriptional activity of PER1. Represses transcriptional activity of PER2 via the B-site on the promoter. Activates transcription from the interleukin-3 promoter in T-cells. Competes for the same consensus-binding site with PAR DNA-binding factors (DBP, HLF and TEF). Component of the circadian clock that acts as a negative regulator for the circadian expression of PER2 oscillation in the cell-autonomous core clock. Protects pro-B cells from programmed cell death. Represses the transcription of CYP2A5. Positively regulates the expression and activity of CES2 by antagonizing the repressive action of NR1D1 on CES2. Required for the development of natural killer cell precursors. The protein is Nuclear factor interleukin-3-regulated protein (NFIL3) of Homo sapiens (Human).